A 95-amino-acid chain; its full sequence is Aspartyl/glutamyl-tRNA(Asn/Gln) amidotransferase subunit C (95 aa).

This sequence belongs to the GatC family. As to quaternary structure, heterotrimer of A, B and C subunits.

It catalyses the reaction L-glutamyl-tRNA(Gln) + L-glutamine + ATP + H2O = L-glutaminyl-tRNA(Gln) + L-glutamate + ADP + phosphate + H(+). It carries out the reaction L-aspartyl-tRNA(Asn) + L-glutamine + ATP + H2O = L-asparaginyl-tRNA(Asn) + L-glutamate + ADP + phosphate + 2 H(+). Functionally, allows the formation of correctly charged Asn-tRNA(Asn) or Gln-tRNA(Gln) through the transamidation of misacylated Asp-tRNA(Asn) or Glu-tRNA(Gln) in organisms which lack either or both of asparaginyl-tRNA or glutaminyl-tRNA synthetases. The reaction takes place in the presence of glutamine and ATP through an activated phospho-Asp-tRNA(Asn) or phospho-Glu-tRNA(Gln). This Azoarcus sp. (strain BH72) protein is Aspartyl/glutamyl-tRNA(Asn/Gln) amidotransferase subunit C.